We begin with the raw amino-acid sequence, 775 residues long: Aconitate hydratase, mitochondrial (775 aa).

A mitochondrion-targeting transit peptide spans 1–25 (MLTTLARASAMLLGARGFASAADLD). Residues Gln95 and 188–190 (DSH) each bind substrate. An N-linked (GlcNAc...) asparagine glycan is attached at Asn337. A [4Fe-4S] cluster-binding site is contributed by Cys381. N-linked (GlcNAc...) asparagine glycosylation is present at Asn383. 2 residues coordinate [4Fe-4S] cluster: Cys444 and Cys447. Arg470 contributes to the substrate binding site. N-linked (GlcNAc...) asparagine glycosylation occurs at Asn471. The substrate site is built by Arg475 and Arg603. N-linked (GlcNAc...) asparagine glycosylation is present at Asn608. Residue 666-667 (SR) coordinates substrate. Asn754 and Asn763 each carry an N-linked (GlcNAc...) asparagine glycan.

It belongs to the aconitase/IPM isomerase family. As to quaternary structure, monomer. [4Fe-4S] cluster is required as a cofactor.

It localises to the mitochondrion. The catalysed reaction is citrate = D-threo-isocitrate. It functions in the pathway carbohydrate metabolism; tricarboxylic acid cycle; isocitrate from oxaloacetate: step 2/2. Catalyzes the isomerization of citrate to isocitrate via cis-aconitate. This is Aconitate hydratase, mitochondrial from Arthroderma benhamiae (strain ATCC MYA-4681 / CBS 112371) (Trichophyton mentagrophytes).